The sequence spans 2586 residues: Highly reducing polyketide synthase FUM1 (2586 aa).

The Ketosynthase family 3 (KS3) domain maps to 29-451 (VLPVAIVGMG…GANAHCIIET (423 aa)). Active-site for beta-ketoacyl synthase activity residues include Cys201, His336, and His374. Positions 609–928 (IFTGQGAQWV…TESLLKLAGE (320 aa)) are malonyl-CoA:ACP transacylase (MAT) domain. The N-terminal hotdog fold stretch occupies residues 980 to 1111 (HELLGSRTLE…GQVRPGQDAH (132 aa)). Residues 980–1269 (HELLGSRTLE…LEDGKFSPLE (290 aa)) are dehydratase (DH) domain. One can recognise a PKS/mFAS DH domain in the interval 980–1274 (HELLGSRTLE…FSPLEMDLAE (295 aa)). The Proton acceptor; for dehydratase activity role is filled by His1012. The C-terminal hotdog fold stretch occupies residues 1125-1274 (QHYPRLVDNL…FSPLEMDLAE (150 aa)). Asp1186 (proton donor; for dehydratase activity) is an active-site residue. The segment at 1450 to 1627 (DFFATAGHTR…GFSGVDSAIY (178 aa)) is methyltransferase (CMet) domain. The segment at 1862–2172 (GLLQTLGWVP…KGVHLGKIVV (311 aa)) is enoyl reductase (ER) (ER) domain. The segment at 2197-2373 (ASYLLVGGLG…ASVLQIGLIE (177 aa)) is ketoreductase (KR) domain. The 80-residue stretch at 2486-2565 (PATVELVTNE…GLARLTVDGL (80 aa)) folds into the Carrier domain. Ser2524 bears the O-(pantetheine 4'-phosphoryl)serine mark.

It functions in the pathway mycotoxin biosynthesis. Highly reducing polyketide synthase; part of the gene cluster that mediates the biosynthesis of fumonisins B1 (FB1), B2 (FB2), B3 (FB3), and B4 (FB4), which are carcinogenic mycotoxins. The biosynthesis starts with the FUM1-catalyzed carbon chain assembly from one molecule of acetyl-CoA, eight molecules of malonyl-CoA, and two molecules of methionine (in S-adenosyl form). The C18 polyketide chain is released from the enzyme by a nucleophilic attack of a carbanion, which is derived from R-carbon of alanine by decarboxylation, on the carbonyl carbon of polyketide acyl chain. This step is catalyzed by the pyridoxal 5'-phosphate-dependent aminoacyl transferase FUM8. The resultant 3-keto intermediate is then stereospecifically reduced to a 3-hydroxyl product by reductase FUM13. Subsequent oxidations at C-10 by the cytochrome P450 monooxygenase FUM2, C-14 and C-15 by FUM6, FUM12 or FUM15, tricarballylic esterification of the hydroxyl groups on C-14 and C-15 by acyltransferase FUM14, and C-5 hydroxylation by 2-keto-glutarate-dependent dioxygenase FUM3 furnish the biosynthesis of fumonisins. The tricarballylic moieties are most likely derived from the citric acid cycle, and their addition to the carbon backbone may involve FUM7, FUM10, FUM11 and FUM14. The protein is Highly reducing polyketide synthase FUM1 of Gibberella moniliformis (strain M3125 / FGSC 7600) (Maize ear and stalk rot fungus).